Here is a 407-residue protein sequence, read N- to C-terminus: Glycolate oxidase iron-sulfur subunit (407 aa).

4Fe-4S ferredoxin-type domains follow at residues Arg-14 to Gly-47 and Leu-66 to Leu-95. Residues Cys-25, Cys-28, Cys-31, Cys-35, Cys-75, Cys-78, Cys-81, and Cys-85 each contribute to the [4Fe-4S] cluster site.

The glycolate oxidase likely consists of three subunits, GlcD, GlcE and GlcF. [4Fe-4S] cluster is required as a cofactor.

The protein resides in the cell inner membrane. The enzyme catalyses glycolate + A = glyoxylate + AH2. The catalysed reaction is (R)-lactate + A = pyruvate + AH2. Its activity is regulated as follows. In vitro the glycolate oxidase activity is inhibited by the sulfhydryl inhibitors CuSO4 and PCMB, by KCN, but not by the metal complexing agent EDTA. Its function is as follows. Component of a complex that catalyzes the oxidation of glycolate to glyoxylate. Is required for E.coli to grow on glycolate as a sole source of carbon. Is also able to oxidize D-lactate ((R)-lactate) with a similar rate. Does not link directly to O(2), and 2,6-dichloroindophenol (DCIP) and phenazine methosulfate (PMS) can act as artificial electron acceptors in vitro, but the physiological molecule that functions as a primary electron acceptor during glycolate oxidation is unknown. The sequence is that of Glycolate oxidase iron-sulfur subunit from Escherichia coli (strain K12).